The sequence spans 608 residues: Phosphogluconate dehydratase (608 aa).

Residues Cys154 and Cys221 each contribute to the [4Fe-4S] cluster site.

This sequence belongs to the IlvD/Edd family. [4Fe-4S] cluster is required as a cofactor.

It carries out the reaction 6-phospho-D-gluconate = 2-dehydro-3-deoxy-6-phospho-D-gluconate + H2O. It participates in carbohydrate metabolism; Entner-Doudoroff pathway. In terms of biological role, catalyzes the dehydration of 6-phospho-D-gluconate to 2-dehydro-3-deoxy-6-phospho-D-gluconate. The sequence is that of Phosphogluconate dehydratase from Pseudomonas aeruginosa (strain ATCC 15692 / DSM 22644 / CIP 104116 / JCM 14847 / LMG 12228 / 1C / PRS 101 / PAO1).